A 487-amino-acid polypeptide reads, in one-letter code: Structure-specific endonuclease subunit SLX1 (487 aa).

The 83-residue stretch at 27–109 folds into the GIY-YIG domain; sequence PFYACYLLRS…QKPELSRHLR (83 aa). Residues 44-69 form a disordered region; sequence RTYVGSTPDPPRRIRQHNGELKQGAW. An SLX1-type zinc finger spans residues 262-328; the sequence is CHLCQERIAF…LPYQGLCPNC (67 aa). The span at 359–396 shows a compositional bias: basic and acidic residues; sequence KAEKAEKAEKAEKAEKAEKAEKAGRKVRQREMKTKKGD. Disordered stretches follow at residues 359–407 and 433–475; these read KAEK…QPES and PARS…SEPE. Over residues 397–407 the composition is skewed to polar residues; the sequence is QSNGTVAQPES. Positions 438 to 455 are enriched in basic and acidic residues; sequence KSKDVGGEGIRHSTHTDD. Positions 465–475 are enriched in acidic residues; sequence ETEDESESEPE.

The protein belongs to the SLX1 family. In terms of assembly, forms a heterodimer with SLX4. It depends on a divalent metal cation as a cofactor.

The protein localises to the nucleus. Catalytic subunit of the SLX1-SLX4 structure-specific endonuclease that resolves DNA secondary structures generated during DNA repair and recombination. Has endonuclease activity towards branched DNA substrates, introducing single-strand cuts in duplex DNA close to junctions with ss-DNA. In Cryptococcus neoformans var. neoformans serotype D (strain B-3501A) (Filobasidiella neoformans), this protein is Structure-specific endonuclease subunit SLX1.